A 293-amino-acid polypeptide reads, in one-letter code: tRNA pseudouridine synthase B (293 aa).

D38 serves as the catalytic Nucleophile.

This sequence belongs to the pseudouridine synthase TruB family. Type 1 subfamily.

The enzyme catalyses uridine(55) in tRNA = pseudouridine(55) in tRNA. Its function is as follows. Responsible for synthesis of pseudouridine from uracil-55 in the psi GC loop of transfer RNAs. This Solibacter usitatus (strain Ellin6076) protein is tRNA pseudouridine synthase B.